The sequence spans 845 residues: ABC transporter A family member 9 (845 aa).

7 helical membrane-spanning segments follow: residues 33–53 (CVQI…NFWV), 192–212 (AFVA…FLGG), 235–255 (IASL…MPLF), 292–312 (IYFI…FAVF), 318–338 (FAMF…SFFL), 347–367 (AASI…SILS), and 417–437 (SKII…ALYL). The region spanning 531 to 762 (VIIEGLTKHY…FGDGYSVRIN (232 aa)) is the ABC transporter domain. Residue 565–572 (GANGAGKT) participates in ATP binding.

It belongs to the ABC transporter superfamily. ABCA family.

Its subcellular location is the membrane. The chain is ABC transporter A family member 9 (abcA9) from Dictyostelium discoideum (Social amoeba).